Reading from the N-terminus, the 497-residue chain is Glycerol kinase (497 aa).

Thr11 lines the ADP pocket. ATP is bound by residues Thr11, Thr12, and Ser13. A sn-glycerol 3-phosphate-binding site is contributed by Thr11. Arg15 provides a ligand contact to ADP. Positions 81, 82, 133, and 242 each coordinate sn-glycerol 3-phosphate. Glycerol-binding residues include Arg81, Glu82, Tyr133, Asp242, and Gln243. ADP contacts are provided by Thr264 and Gly306. Residues Thr264, Gly306, Gln310, and Gly407 each contribute to the ATP site. ADP-binding residues include Gly407 and Asn411.

It belongs to the FGGY kinase family.

It carries out the reaction glycerol + ATP = sn-glycerol 3-phosphate + ADP + H(+). Its pathway is polyol metabolism; glycerol degradation via glycerol kinase pathway; sn-glycerol 3-phosphate from glycerol: step 1/1. Inhibited by fructose 1,6-bisphosphate (FBP). Key enzyme in the regulation of glycerol uptake and metabolism. Catalyzes the phosphorylation of glycerol to yield sn-glycerol 3-phosphate. The chain is Glycerol kinase from Alcanivorax borkumensis (strain ATCC 700651 / DSM 11573 / NCIMB 13689 / SK2).